The sequence spans 284 residues: Sulfotransferase 4A1 (284 aa).

A phosphothreonine mark is found at Thr-8, Thr-11, and Thr-205.

Belongs to the sulfotransferase 1 family. Expressed in brain, cerebellum and hypothalamus. Not detected in pancreas, liver, lung, intestine, kidney, uterus, adrenal gland, thymus, spleen, epididymis, testicle, and heart.

It is found in the cytoplasm. In terms of biological role, atypical sulfotransferase family member with very low affinity for 3'-phospho-5'-adenylyl sulfate (PAPS) and very low catalytic activity towards L-triiodothyronine, thyroxine, estrone, p-nitrophenol, 2-naphthylamine, and 2-beta-naphthol. May have a role in the metabolism of drugs and neurotransmitters in the CNS. In Mus musculus (Mouse), this protein is Sulfotransferase 4A1 (Sult4a1).